The primary structure comprises 531 residues: 5-(hydroxymethyl)furfural oxidase (531 aa).

FAD contacts are provided by residues 15 to 16, 36 to 37, tryptophan 68, leucine 94, glycine 98, 102 to 105, valine 233, and tryptophan 466; these read TA, EA, and NMVV. Catalysis depends on histidine 467, which acts as the Proton acceptor. FAD is bound by residues alanine 501 and 512–513; that span reads TN.

This sequence belongs to the GMC oxidoreductase family. In terms of assembly, monomer. Requires FAD as cofactor.

The enzyme catalyses 5-hydroxymethylfurfural + 3 O2 + 2 H2O = 2,5-dicarboxyfuran + 3 H2O2 + 2 H(+). It carries out the reaction benzylthiol + O2 = benzothialdehyde + H2O2. In terms of biological role, involved in the degradation and detoxification of 5-(hydroxymethyl)furfural (HMF) by mediating its oxidation to furan-2,5-dicarboxylate (FDCA), a biobased platform chemical for the production of polymers. Active with a wide range of aromatic and aliphatic primary alcohols and aldehydes: acts on alcohol groups and requires the spontaneous hydration of aldehyde groups for their oxidation. To a lesser extent, is also able to catalyze the oxidation of thiols that are structurally similar to its alcohol substrates, yielding the corresponding thiocarbonyls. The chain is 5-(hydroxymethyl)furfural oxidase from Methylovorus sp. (strain MP688).